Consider the following 148-residue polypeptide: uncharacterized protein (148 aa).

Residues 1–144 (MNIKRITTEA…PHVLMTKEIS (144 aa)) form the N-acetyltransferase domain.

This is an uncharacterized protein from Bacillus subtilis (strain 168).